A 329-amino-acid chain; its full sequence is Porphobilinogen deaminase (329 aa).

Cys250 carries the S-(dipyrrolylmethanemethyl)cysteine modification.

It belongs to the HMBS family. Monomer. Requires dipyrromethane as cofactor.

The enzyme catalyses 4 porphobilinogen + H2O = hydroxymethylbilane + 4 NH4(+). It participates in porphyrin-containing compound metabolism; protoporphyrin-IX biosynthesis; coproporphyrinogen-III from 5-aminolevulinate: step 2/4. In terms of biological role, tetrapolymerization of the monopyrrole PBG into the hydroxymethylbilane pre-uroporphyrinogen in several discrete steps. The polypeptide is Porphobilinogen deaminase (Burkholderia mallei (strain NCTC 10247)).